A 550-amino-acid chain; its full sequence is Probable acyl-activating enzyme 9 (550 aa).

This sequence belongs to the ATP-dependent AMP-binding enzyme family. In terms of tissue distribution, expressed in leaves, flowers and developing seeds.

May act as an acid--thiol ligase that activates carboxylic acids by forming acyl-CoAs. The protein is Probable acyl-activating enzyme 9 (AEE9) of Arabidopsis thaliana (Mouse-ear cress).